Consider the following 133-residue polypeptide: ATP synthase epsilon chain (133 aa).

This sequence belongs to the ATPase epsilon chain family. As to quaternary structure, F-type ATPases have 2 components, CF(1) - the catalytic core - and CF(0) - the membrane proton channel. CF(1) has five subunits: alpha(3), beta(3), gamma(1), delta(1), epsilon(1). CF(0) has three main subunits: a, b and c.

The protein localises to the cell membrane. Its function is as follows. Produces ATP from ADP in the presence of a proton gradient across the membrane. This chain is ATP synthase epsilon chain, found in Staphylococcus haemolyticus (strain JCSC1435).